The following is a 148-amino-acid chain: Small ribosomal subunit protein uS7m (148 aa).

It belongs to the universal ribosomal protein uS7 family. Part of the small ribosomal subunit.

It is found in the mitochondrion. Functionally, one of the primary rRNA binding proteins, it binds directly to 18S rRNA where it nucleates assembly of the head domain of the small subunit. The polypeptide is Small ribosomal subunit protein uS7m (RPS7) (Triticum aestivum (Wheat)).